A 288-amino-acid polypeptide reads, in one-letter code: Acetyl-coenzyme A carboxylase carboxyl transferase subunit beta (288 aa).

The 255-residue stretch at 34–288 (LFAKCPACKH…HLVAFHGGVS (255 aa)) folds into the CoA carboxyltransferase N-terminal domain. Residues Cys38, Cys41, Cys56, and Cys59 each contribute to the Zn(2+) site. Residues 38–59 (CPACKHMIYQKDLGPAKICPTC) form a C4-type zinc finger.

The protein belongs to the AccD/PCCB family. In terms of assembly, acetyl-CoA carboxylase is a heterohexamer composed of biotin carboxyl carrier protein (AccB), biotin carboxylase (AccC) and two subunits each of ACCase subunit alpha (AccA) and ACCase subunit beta (AccD). The cofactor is Zn(2+).

It is found in the cytoplasm. The catalysed reaction is N(6)-carboxybiotinyl-L-lysyl-[protein] + acetyl-CoA = N(6)-biotinyl-L-lysyl-[protein] + malonyl-CoA. Its pathway is lipid metabolism; malonyl-CoA biosynthesis; malonyl-CoA from acetyl-CoA: step 1/1. Component of the acetyl coenzyme A carboxylase (ACC) complex. Biotin carboxylase (BC) catalyzes the carboxylation of biotin on its carrier protein (BCCP) and then the CO(2) group is transferred by the transcarboxylase to acetyl-CoA to form malonyl-CoA. The sequence is that of Acetyl-coenzyme A carboxylase carboxyl transferase subunit beta from Streptococcus equi subsp. equi (strain 4047).